A 457-amino-acid polypeptide reads, in one-letter code: Siroheme synthase (457 aa).

A precorrin-2 dehydrogenase /sirohydrochlorin ferrochelatase region spans residues 1-204; the sequence is MDHLPIFCQL…NDQKAITETT (204 aa). NAD(+)-binding positions include 22–23 and 43–44; these read DV and LA. Position 128 is a phosphoserine (S128). The interval 216-457 is uroporphyrinogen-III C-methyltransferase; it reads GEVVLVGAGP…RDKLNWFSNH (242 aa). P225 lines the S-adenosyl-L-methionine pocket. Residue D248 is the Proton acceptor of the active site. Catalysis depends on K270, which acts as the Proton donor. S-adenosyl-L-methionine-binding positions include 301–303, I306, 331–332, M382, and G411; these read GGD and TA.

It in the N-terminal section; belongs to the precorrin-2 dehydrogenase / sirohydrochlorin ferrochelatase family. In the C-terminal section; belongs to the precorrin methyltransferase family.

The enzyme catalyses uroporphyrinogen III + 2 S-adenosyl-L-methionine = precorrin-2 + 2 S-adenosyl-L-homocysteine + H(+). It carries out the reaction precorrin-2 + NAD(+) = sirohydrochlorin + NADH + 2 H(+). It catalyses the reaction siroheme + 2 H(+) = sirohydrochlorin + Fe(2+). Its pathway is cofactor biosynthesis; adenosylcobalamin biosynthesis; precorrin-2 from uroporphyrinogen III: step 1/1. It participates in cofactor biosynthesis; adenosylcobalamin biosynthesis; sirohydrochlorin from precorrin-2: step 1/1. It functions in the pathway porphyrin-containing compound metabolism; siroheme biosynthesis; precorrin-2 from uroporphyrinogen III: step 1/1. The protein operates within porphyrin-containing compound metabolism; siroheme biosynthesis; siroheme from sirohydrochlorin: step 1/1. Its pathway is porphyrin-containing compound metabolism; siroheme biosynthesis; sirohydrochlorin from precorrin-2: step 1/1. Functionally, multifunctional enzyme that catalyzes the SAM-dependent methylations of uroporphyrinogen III at position C-2 and C-7 to form precorrin-2 via precorrin-1. Then it catalyzes the NAD-dependent ring dehydrogenation of precorrin-2 to yield sirohydrochlorin. Finally, it catalyzes the ferrochelation of sirohydrochlorin to yield siroheme. In Shigella boydii serotype 18 (strain CDC 3083-94 / BS512), this protein is Siroheme synthase.